The chain runs to 260 residues: Cytochrome c oxidase subunit 3 (260 aa).

The next 6 membrane-spanning stretches (helical) occupy residues 41 to 61, 81 to 101, 133 to 153, 161 to 181, 196 to 216, and 238 to 258; these read LTLV…RDII, GMIL…WAFF, TGVL…ILAG, ALFL…WEYI, FFVA…FLMV, and AWYW…IYWW.

The protein belongs to the cytochrome c oxidase subunit 3 family. Component of the cytochrome c oxidase (complex IV, CIV), a multisubunit enzyme composed of a catalytic core of 3 subunits and several supernumerary subunits. The complex exists as a monomer or a dimer and forms supercomplexes (SCs) in the inner mitochondrial membrane with ubiquinol-cytochrome c oxidoreductase (cytochrome b-c1 complex, complex III, CIII).

Its subcellular location is the mitochondrion inner membrane. It catalyses the reaction 4 Fe(II)-[cytochrome c] + O2 + 8 H(+)(in) = 4 Fe(III)-[cytochrome c] + 2 H2O + 4 H(+)(out). Its function is as follows. Component of the cytochrome c oxidase, the last enzyme in the mitochondrial electron transport chain which drives oxidative phosphorylation. The respiratory chain contains 3 multisubunit complexes succinate dehydrogenase (complex II, CII), ubiquinol-cytochrome c oxidoreductase (cytochrome b-c1 complex, complex III, CIII) and cytochrome c oxidase (complex IV, CIV), that cooperate to transfer electrons derived from NADH and succinate to molecular oxygen, creating an electrochemical gradient over the inner membrane that drives transmembrane transport and the ATP synthase. Cytochrome c oxidase is the component of the respiratory chain that catalyzes the reduction of oxygen to water. Electrons originating from reduced cytochrome c in the intermembrane space (IMS) are transferred via the dinuclear copper A center (CU(A)) of subunit 2 and heme A of subunit 1 to the active site in subunit 1, a binuclear center (BNC) formed by heme A3 and copper B (CU(B)). The BNC reduces molecular oxygen to 2 water molecules using 4 electrons from cytochrome c in the IMS and 4 protons from the mitochondrial matrix. The chain is Cytochrome c oxidase subunit 3 (COIII) from Strongylocentrotus purpuratus (Purple sea urchin).